The sequence spans 316 residues: Coproporphyrin III ferrochelatase (316 aa).

Fe-coproporphyrin III-binding positions include Y13, R30, 46–47 (RY), S54, and Y125. H183 and E264 together coordinate Fe(2+).

Belongs to the ferrochelatase family.

It is found in the cytoplasm. It catalyses the reaction Fe-coproporphyrin III + 2 H(+) = coproporphyrin III + Fe(2+). It functions in the pathway porphyrin-containing compound metabolism; protoheme biosynthesis. Its function is as follows. Involved in coproporphyrin-dependent heme b biosynthesis. Catalyzes the insertion of ferrous iron into coproporphyrin III to form Fe-coproporphyrin III. The sequence is that of Coproporphyrin III ferrochelatase from Geobacillus kaustophilus (strain HTA426).